The primary structure comprises 131 residues: Small ribosomal subunit protein uS8 (131 aa).

Belongs to the universal ribosomal protein uS8 family. In terms of assembly, part of the 30S ribosomal subunit. Contacts proteins S5 and S12.

Its function is as follows. One of the primary rRNA binding proteins, it binds directly to 16S rRNA central domain where it helps coordinate assembly of the platform of the 30S subunit. This chain is Small ribosomal subunit protein uS8, found in Chlorobium chlorochromatii (strain CaD3).